We begin with the raw amino-acid sequence, 161 residues long: MPSFDIVSEVDEVELRNAVENSRRELSSRFDFRGKDASIEYKDHVVTLTAEDDFQCKQLVDILRTQLSKRNVEPSTMDVDEKSVHSGKTFSLKVRFKQGIETDIAKKIVKMVKDSKIKVQSQIQGDTVRVTGKARDDLQAVMALVRQADLGQPFQFNNFRD.

This sequence belongs to the YajQ family.

Its function is as follows. Nucleotide-binding protein. This Shewanella sp. (strain MR-4) protein is Nucleotide-binding protein Shewmr4_3156.